The primary structure comprises 334 residues: Large ribosomal subunit protein uL3 (334 aa).

The segment covering 1 to 10 (MGMKKNRPRR) has biased composition (basic residues). Residues 1–21 (MGMKKNRPRRGSLAFSPRKRA) are disordered.

It belongs to the universal ribosomal protein uL3 family. In terms of assembly, part of the 50S ribosomal subunit. Forms a cluster with proteins L14 and L24e.

Its function is as follows. One of the primary rRNA binding proteins, it binds directly near the 3'-end of the 23S rRNA, where it nucleates assembly of the 50S subunit. The protein is Large ribosomal subunit protein uL3 of Methanococcus vannielii (strain ATCC 35089 / DSM 1224 / JCM 13029 / OCM 148 / SB).